The primary structure comprises 26 residues: Somatostatin-1 (26 aa).

A disulfide bridge links cysteine 15 with cysteine 26.

The protein belongs to the somatostatin family.

The protein localises to the secreted. Functionally, somatostatin inhibits the release of somatotropin. The polypeptide is Somatostatin-1 (sst1) (Amia calva (Bowfin)).